Reading from the N-terminus, the 376-residue chain is PqqA peptide cyclase (376 aa).

Residues 4–219 (VPPPLSVLLE…VETARRSLGD (216 aa)) enclose the Radical SAM core domain. Positions 18, 22, and 25 each coordinate [4Fe-4S] cluster.

It belongs to the radical SAM superfamily. PqqE family. In terms of assembly, interacts with PqqD. The interaction is necessary for activity of PqqE. [4Fe-4S] cluster is required as a cofactor.

The catalysed reaction is [PQQ precursor protein] + S-adenosyl-L-methionine = E-Y cross-linked-[PQQ precursor protein] + 5'-deoxyadenosine + L-methionine + H(+). The protein operates within cofactor biosynthesis; pyrroloquinoline quinone biosynthesis. In terms of biological role, catalyzes the cross-linking of a glutamate residue and a tyrosine residue in the PqqA protein as part of the biosynthesis of pyrroloquinoline quinone (PQQ). The sequence is that of PqqA peptide cyclase from Xanthomonas campestris pv. campestris (strain B100).